A 453-amino-acid chain; its full sequence is Bifunctional protein GlmU (453 aa).

Residues 1–227 (MNKLSVVILA…LMEVEGVNNR (227 aa)) are pyrophosphorylase. Residues 9–12 (LAAG), Lys23, Gln74, 79–80 (GT), 101–103 (YGD), Gly138, Glu152, Asn167, and Asn225 each bind UDP-N-acetyl-alpha-D-glucosamine. A Mg(2+)-binding site is contributed by Asp103. A Mg(2+)-binding site is contributed by Asn225. A linker region spans residues 228–248 (LQLANLERHYQRKQVEKLLLA). The tract at residues 249-453 (GVTFADPARF…ISNWQRPKRK (205 aa)) is N-acetyltransferase. Residues Arg331 and Lys349 each contribute to the UDP-N-acetyl-alpha-D-glucosamine site. His361 (proton acceptor) is an active-site residue. Residues Tyr364 and Asn375 each coordinate UDP-N-acetyl-alpha-D-glucosamine. Acetyl-CoA contacts are provided by residues Ala378, 384–385 (NY), Ser403, Ala421, and Arg438.

The protein in the N-terminal section; belongs to the N-acetylglucosamine-1-phosphate uridyltransferase family. It in the C-terminal section; belongs to the transferase hexapeptide repeat family. Homotrimer. Mg(2+) is required as a cofactor.

It localises to the cytoplasm. The catalysed reaction is alpha-D-glucosamine 1-phosphate + acetyl-CoA = N-acetyl-alpha-D-glucosamine 1-phosphate + CoA + H(+). It catalyses the reaction N-acetyl-alpha-D-glucosamine 1-phosphate + UTP + H(+) = UDP-N-acetyl-alpha-D-glucosamine + diphosphate. It functions in the pathway nucleotide-sugar biosynthesis; UDP-N-acetyl-alpha-D-glucosamine biosynthesis; N-acetyl-alpha-D-glucosamine 1-phosphate from alpha-D-glucosamine 6-phosphate (route II): step 2/2. Its pathway is nucleotide-sugar biosynthesis; UDP-N-acetyl-alpha-D-glucosamine biosynthesis; UDP-N-acetyl-alpha-D-glucosamine from N-acetyl-alpha-D-glucosamine 1-phosphate: step 1/1. The protein operates within bacterial outer membrane biogenesis; LPS lipid A biosynthesis. Catalyzes the last two sequential reactions in the de novo biosynthetic pathway for UDP-N-acetylglucosamine (UDP-GlcNAc). The C-terminal domain catalyzes the transfer of acetyl group from acetyl coenzyme A to glucosamine-1-phosphate (GlcN-1-P) to produce N-acetylglucosamine-1-phosphate (GlcNAc-1-P), which is converted into UDP-GlcNAc by the transfer of uridine 5-monophosphate (from uridine 5-triphosphate), a reaction catalyzed by the N-terminal domain. In Histophilus somni (strain 2336) (Haemophilus somnus), this protein is Bifunctional protein GlmU.